The primary structure comprises 106 residues: Cytochrome c3 (106 aa).

Residues His-26, His-29, Cys-34, Cys-37, His-38, His-39, Cys-50, Cys-55, His-56, His-75, Cys-82, Cys-85, His-86, Cys-98, Cys-101, and His-102 each coordinate heme c.

Post-translationally, binds 4 heme c groups per subunit.

Its function is as follows. Participates in sulfate respiration coupled with phosphorylation by transferring electrons from the enzyme dehydrogenase to ferredoxin. The protein is Cytochrome c3 of Maridesulfovibrio salexigens (Desulfovibrio salexigens).